We begin with the raw amino-acid sequence, 109 residues long: Large ribosomal subunit protein uL22 (109 aa).

This sequence belongs to the universal ribosomal protein uL22 family. As to quaternary structure, part of the 50S ribosomal subunit.

Functionally, this protein binds specifically to 23S rRNA; its binding is stimulated by other ribosomal proteins, e.g. L4, L17, and L20. It is important during the early stages of 50S assembly. It makes multiple contacts with different domains of the 23S rRNA in the assembled 50S subunit and ribosome. In terms of biological role, the globular domain of the protein is located near the polypeptide exit tunnel on the outside of the subunit, while an extended beta-hairpin is found that lines the wall of the exit tunnel in the center of the 70S ribosome. The chain is Large ribosomal subunit protein uL22 from Cupriavidus necator (strain ATCC 17699 / DSM 428 / KCTC 22496 / NCIMB 10442 / H16 / Stanier 337) (Ralstonia eutropha).